The sequence spans 98 residues: mRNA interferase toxin MqsR (98 aa).

As to quaternary structure, might be a dimer. Also reported to be a monomer. Crystallizes as a heterotetramer with MqsA, MqsR-MqsA(2)-MqsR. Purifies as a possible heterohexamer of 2 MqsR dimers and 1 MqsA dimer. When the 2 dissociate the MsqR mRNA interferase becomes active.

In terms of biological role, toxic component of a type II toxin-antitoxin (TA) system. Plays a significant role in the control of biofilm formation and induction of persister cells in the presence of antibiotics. An mRNA interferase which has been reported to be translation-independent. It has also been reported to be translation-dependent. Cleavage has been reported to occur on either side of G in the sequence GCU. Also reported to cleave after C in GC(A/U) sequences. There are only 14 genes in E.coli W3110 (and probably also MG1655) that do not have a GCU sequence and thus are resistant to the mRNA interferase activity; among these is the gene for toxin GhoT. Overexpression of MqsR causes cessation of cell growth and inhibits cell proliferation via inhibition of translation as well as increasing persister cell formation; these effects are overcome by concomitant or subsequent expression of antitoxin MqsA. Cross-talk can occur between different TA systems. Ectopic expression of this toxin induces transcription of the relBEF TA system operon with specific cleavage of the relBEF mRNA produced. Regulates the expression of GhoT/GhoS, a type V TA system. Persistence depends on toxin GhoT activity, which MqsR controls at the post-transcriptional level by selectively degrading the antitoxin ghoS segment of the ghoST mRNA. Overexpression leads to a dramatic increase in tolerance to the antibiotic ofloxacin. This TA system mediates cell growth during bile acid deoxycholate stress by degrading mRNA for probable deoxycholate-binding protein YgiS; bile acid detergents such as deoxycholate are important for host defense against bacterial growth in the gall bladder and duodenum. Its function is as follows. Initially reported to act as a cotranscription factor with MqsA. Following further experiments, the MqsR-MqsA complex does not bind DNA and all reported data are actually due to a small fraction of free MqsA alone binding DNA. Addition of MqsR to a preformed MqsA-promoter DNA complex causes dissociation of the MqsA-DNA complex, probably causing derepression of MqsA-repressed transcripts. Does not bind DNA in the presence or absence of MqsA. This chain is mRNA interferase toxin MqsR, found in Escherichia coli (strain K12).